A 540-amino-acid chain; its full sequence is MLSSKLFCVLFFCLGLSNGWPQFDFMNQMGFGGGFNNGPHPNSRPGSRPNSPLGDIFGNINGMVKGITDQIGKIAQGLDVNNDLGKMAHGPPPPQSEWVEHARRFCRRFPGHPKCRGQLPQFNDIGSMLNGILVDSGKWLPKVPFINIRDPLSGINSDLKNALNGIQVQFGQISQQFANNIRNICQQMNCKQQQQKNVQMKQAILKQTVDFEKKVFGNNVADKMNLRFDRTLQLKQALLEKAQLKGVVAPEDNGVFDKDLLLTETQANFMLNELGKGGEGAIPMPGSAKAKRASIFFEQNLIQKWPSTSPIPYTFDSSLDNLDQNDVRGAISEIEQKTCIRFKYFASPPKGNHINYQKVNSPSFCGLSYIGRVEPANPVYLSFQCGNGRGIAVHETMHALGVNHQHLRMDRDKHIKVDWSNINPQQYDAFVVADSKLYTTYGVKYAYDSIMHYNAYTGAVNIAKPTMIPLVNQQANIGLLGQRAKMSNADVEILNKMYCKSAGCDDKNVYCGAWALQDLCNNPNHNVWMRSNCRKSCNFC.

Residues 293–500 (ASIFFEQNLI…VEILNKMYCK (208 aa)) form the Peptidase M12A domain. Disulfide bonds link Cys-339–Cys-499, Cys-365–Cys-385, Cys-504–Cys-540, Cys-511–Cys-533, and Cys-520–Cys-537. His-394 provides a ligand contact to Zn(2+). Residue Glu-395 is part of the active site. 2 residues coordinate Zn(2+): His-398 and His-404. Residues 504–540 (CDDKNVYCGAWALQDLCNNPNHNVWMRSNCRKSCNFC) enclose the ShKT domain.

Zn(2+) serves as cofactor.

In terms of biological role, metalloprotease. This Caenorhabditis elegans protein is Zinc metalloproteinase nas-10.